Reading from the N-terminus, the 473-residue chain is Ribosomal RNA small subunit methyltransferase F (473 aa).

Residues 124–130 (ASAPGSK), Glu148, Asp175, and Asp193 each bind S-adenosyl-L-methionine. The active-site Nucleophile is the Cys246.

This sequence belongs to the class I-like SAM-binding methyltransferase superfamily. RsmB/NOP family.

It localises to the cytoplasm. The enzyme catalyses cytidine(1407) in 16S rRNA + S-adenosyl-L-methionine = 5-methylcytidine(1407) in 16S rRNA + S-adenosyl-L-homocysteine + H(+). Its function is as follows. Specifically methylates the cytosine at position 1407 (m5C1407) of 16S rRNA. The protein is Ribosomal RNA small subunit methyltransferase F of Aliivibrio salmonicida (strain LFI1238) (Vibrio salmonicida (strain LFI1238)).